The primary structure comprises 642 residues: Threonine--tRNA ligase (642 aa).

Residues 1–61 (MPVIRFYDGS…REDAFIEFVD (61 aa)) form the TGS domain. The interval 243-534 (DHRKIGKFLQ…LIEECSGNLP (292 aa)) is catalytic. Zn(2+)-binding residues include Cys334, His385, and His511.

This sequence belongs to the class-II aminoacyl-tRNA synthetase family. In terms of assembly, homodimer. It depends on Zn(2+) as a cofactor.

The protein localises to the cytoplasm. It carries out the reaction tRNA(Thr) + L-threonine + ATP = L-threonyl-tRNA(Thr) + AMP + diphosphate + H(+). Catalyzes the attachment of threonine to tRNA(Thr) in a two-step reaction: L-threonine is first activated by ATP to form Thr-AMP and then transferred to the acceptor end of tRNA(Thr). Also edits incorrectly charged L-seryl-tRNA(Thr). This chain is Threonine--tRNA ligase, found in Buchnera aphidicola subsp. Acyrthosiphon pisum (strain APS) (Acyrthosiphon pisum symbiotic bacterium).